Consider the following 254-residue polypeptide: Hydroxypyruvate/pyruvate aldolase (254 aa).

The active-site Proton acceptor is His47. Residues Glu151 and Asp177 each coordinate a divalent metal cation.

Belongs to the HpcH/HpaI aldolase family. A divalent metal cation is required as a cofactor.

The enzyme catalyses D-glyceraldehyde + pyruvate = 2-dehydro-3-deoxy-L-galactonate. Its function is as follows. Aldolase which can catalyze in vitro the aldolisation reaction between hydroxypyruvate (HPA) or pyruvate (PA) and D-glyceraldehyde (D-GA). The condensation of pyruvate and D-glyceraldehyde produces 2-dehydro-3-deoxy-L-galactonate as the major product. Has weak activity with hydroxypyruvate and D-glyceraldehyde. This Chromohalobacter salexigens (strain ATCC BAA-138 / DSM 3043 / CIP 106854 / NCIMB 13768 / 1H11) protein is Hydroxypyruvate/pyruvate aldolase.